A 490-amino-acid polypeptide reads, in one-letter code: Serine hydroxymethyltransferase (490 aa).

(6S)-5,6,7,8-tetrahydrofolate contacts are provided by residues leucine 179 and glycine 183–leucine 185. Lysine 291 is modified (N6-(pyridoxal phosphate)lysine). Lysine 362 participates in a covalent cross-link: Isoglutamyl lysine isopeptide (Lys-Gln) (interchain with Q-Cter in protein Pup).

It belongs to the SHMT family. Homodimer. It depends on pyridoxal 5'-phosphate as a cofactor.

Its subcellular location is the cytoplasm. The enzyme catalyses (6R)-5,10-methylene-5,6,7,8-tetrahydrofolate + glycine + H2O = (6S)-5,6,7,8-tetrahydrofolate + L-serine. Its pathway is one-carbon metabolism; tetrahydrofolate interconversion. The protein operates within amino-acid biosynthesis; glycine biosynthesis; glycine from L-serine: step 1/1. Catalyzes the reversible interconversion of serine and glycine with tetrahydrofolate (THF) serving as the one-carbon carrier. This reaction serves as the major source of one-carbon groups required for the biosynthesis of purines, thymidylate, methionine, and other important biomolecules. Also exhibits THF-independent aldolase activity toward beta-hydroxyamino acids, producing glycine and aldehydes, via a retro-aldol mechanism. This is Serine hydroxymethyltransferase from Mycolicibacterium smegmatis (strain ATCC 700084 / mc(2)155) (Mycobacterium smegmatis).